The following is a 363-amino-acid chain: 2,5-diketocamphane 1,2-monooxygenase 2 (363 aa).

FMN is bound by residues Met74 and Thr186 to Ser194.

This sequence belongs to the bacterial luciferase oxidoreductase family. Homodimer. Likely forms a loose transient complex with a P.putida flavin reductase that provides the required FMNH(2) to the enzyme.

It carries out the reaction (1R,4R)-bornane-2,5-dione + FMNH2 + O2 = (1R,4R)-5-oxo-1,2-campholide + FMN + H2O + H(+). Its pathway is terpene metabolism; (R)-camphor degradation. Functionally, involved in the degradation and assimilation of (+)-camphor, which allows P.putida strain NCIMB 10007 to grow on this enantiomer of camphor as the sole carbon source. Catalyzes the FMNH(2)-dependent lactonization of 2,5-diketocamphane via a Baeyer-Villiger oxidation to produce the unstable lactone 5-oxo-1,2-campholide with (R,R) configuration, that presumably undergoes spontaneous hydrolysis to form 2-oxo-Delta(3)-4,5,5-trimethylcyclopentenylacetate. Is also able to convert (+)-camphor and norcamphor to the corresponding lactone in vitro. Shows no conversion of (-)-camphor, (+)-fenchone, (-)-fenchone, and (+)-nopinone. Acts on other bicyclic ketones and, to a lesser extent, on some 2- and 4-substituted monocyclic ketones. The chain is 2,5-diketocamphane 1,2-monooxygenase 2 from Pseudomonas putida (Arthrobacter siderocapsulatus).